A 102-amino-acid polypeptide reads, in one-letter code: MAKQKIRIRLKAYEHRILDQSADKIVETAKRTGATISGPIPLPTERTLYTVIRSPHKYKDSREQFEMRTHKRLIDIVNPTPKTVDSLMKLDLPSGVDIEIKL.

It belongs to the universal ribosomal protein uS10 family. In terms of assembly, part of the 30S ribosomal subunit.

Its function is as follows. Involved in the binding of tRNA to the ribosomes. This Ligilactobacillus salivarius (strain UCC118) (Lactobacillus salivarius) protein is Small ribosomal subunit protein uS10.